A 61-amino-acid polypeptide reads, in one-letter code: Small ribosomal subunit protein uS14 (61 aa).

Residues Cys-24, Cys-27, Cys-40, and Cys-43 each coordinate Zn(2+).

The protein belongs to the universal ribosomal protein uS14 family. Zinc-binding uS14 subfamily. As to quaternary structure, part of the 30S ribosomal subunit. Contacts proteins S3 and S10. Zn(2+) serves as cofactor.

Functionally, binds 16S rRNA, required for the assembly of 30S particles and may also be responsible for determining the conformation of the 16S rRNA at the A site. This chain is Small ribosomal subunit protein uS14, found in Trichlorobacter lovleyi (strain ATCC BAA-1151 / DSM 17278 / SZ) (Geobacter lovleyi).